The sequence spans 210 residues: Cell division protein SepF (210 aa).

Disordered regions lie at residues 22-72 (DYYE…FDDA) and 79-98 (RGPR…RGST). Composition is skewed to basic and acidic residues over residues 37-60 (RPRE…REYD) and 79-88 (RGPREFDRTP).

Belongs to the SepF family. Homodimer. Interacts with FtsZ.

Its subcellular location is the cytoplasm. Its function is as follows. Cell division protein that is part of the divisome complex and is recruited early to the Z-ring. Probably stimulates Z-ring formation, perhaps through the cross-linking of FtsZ protofilaments. Its function overlaps with FtsA. This Mycolicibacterium vanbaalenii (strain DSM 7251 / JCM 13017 / BCRC 16820 / KCTC 9966 / NRRL B-24157 / PYR-1) (Mycobacterium vanbaalenii) protein is Cell division protein SepF.